We begin with the raw amino-acid sequence, 1396 residues long: DNA-directed RNA polymerase subunit beta (1396 aa).

Belongs to the RNA polymerase beta chain family. The RNAP catalytic core consists of 2 alpha, 1 beta, 1 beta' and 1 omega subunit. When a sigma factor is associated with the core the holoenzyme is formed, which can initiate transcription.

It carries out the reaction RNA(n) + a ribonucleoside 5'-triphosphate = RNA(n+1) + diphosphate. In terms of biological role, DNA-dependent RNA polymerase catalyzes the transcription of DNA into RNA using the four ribonucleoside triphosphates as substrates. The protein is DNA-directed RNA polymerase subunit beta of Erythrobacter litoralis (strain HTCC2594).